The primary structure comprises 277 residues: Large ribosomal subunit protein uL2c (277 aa).

The segment at 30-60 (RKKLTSGQHSGKGRNNRGIITSRHRGGGHKR) is disordered. Basic residues predominate over residues 51–60 (SRHRGGGHKR).

This sequence belongs to the universal ribosomal protein uL2 family. As to quaternary structure, part of the 50S ribosomal subunit.

It localises to the plastid. The protein localises to the chloroplast. In Angiopteris evecta (Mule's foot fern), this protein is Large ribosomal subunit protein uL2c (rpl2).